The sequence spans 919 residues: Eukaryotic translation initiation factor 3 subunit C (919 aa).

The tract at residues 1–28 is disordered; it reads MSRFFANGSDSESESSEEEVQAPNFNKA. A compositionally biased stretch (acidic residues) spans 11–20; that stretch reads SESESSEEEV. Phosphoserine occurs at positions 34, 165, and 177. The tract at residues 154 to 275 is disordered; it reads LSRFRENPQE…EQKIKLRKRA (122 aa). Residues 162-171 are compositionally biased toward acidic residues; sequence QEESENEDEE. Residues 210-236 show a composition bias toward acidic residues; that stretch reads ADDEDSDESIDWDPDTESETESSEDEN. Residues 241–269 are compositionally biased toward basic and acidic residues; that stretch reads MRERFLKRSTEKDDKDDDKRKDKRKEQKI. A PCI domain is found at 640–816; that stretch reads FHMHINLELL…ETVVMHRSEP (177 aa). The segment at 848–919 is disordered; it reads FFQRGNMGNR…QQQVQTIDEE (72 aa). Basic residues predominate over residues 883-894; the sequence is QRNRNQRGHHKN. Low complexity predominate over residues 895 to 919; sequence QQNQNQQQQQQHQREQQQVQTIDEE.

It belongs to the eIF-3 subunit C family. Component of the eukaryotic translation initiation factor 3 (eIF-3) complex. The eIF-3 complex interacts with pix.

It localises to the cytoplasm. Component of the eukaryotic translation initiation factor 3 (eIF-3) complex, which is involved in protein synthesis of a specialized repertoire of mRNAs and, together with other initiation factors, stimulates binding of mRNA and methionyl-tRNAi to the 40S ribosome. The eIF-3 complex specifically targets and initiates translation of a subset of mRNAs involved in cell proliferation. This Drosophila willistoni (Fruit fly) protein is Eukaryotic translation initiation factor 3 subunit C.